Here is a 356-residue protein sequence, read N- to C-terminus: MRRELLLEKIDELKELMPWYVLEYYQSKLTVPYSFTTLYEYLKEYRRFFEWLIDSGVSNANKLADIPLETLEHLSKKDMESFILYLRERTLLNTKNKRQGVSQTTINRTLSALSSLYKYLTEEVENADGEPYFYRNVMKKVSTKKKKETLAARAENIKQKLFLGNETMEFLEYVDCEYEHKLSKRALSSFRKNKERDLAIIALLLASGVRLSEAVNLDLKDVNLNMMIIEVTRKGGKHDSVNVAGFAKPYLENYITIRRGRYKAKKTDLAFFLSEYRGVPNRMDASSIEKMVAKYSQDFKIRVTPHKLRHTLATRLYDATKSQVLVSHQLGHASTQVTDLYTHIVNDEQKNALDKL.

Positions 16–121 constitute a Core-binding (CB) domain; the sequence is LMPWYVLEYY…ALSSLYKYLT (106 aa). The 186-residue stretch at 169–354 folds into the Tyr recombinase domain; sequence EFLEYVDCEY…VNDEQKNALD (186 aa). Residues R210, K234, H306, R309, and H332 contribute to the active site. Y341 (O-(3'-phospho-DNA)-tyrosine intermediate) is an active-site residue.

The protein belongs to the 'phage' integrase family. XerS subfamily.

The protein localises to the cytoplasm. Its activity is regulated as follows. FtsK is required for recombination. Site-specific tyrosine recombinase, which acts by catalyzing the cutting and rejoining of the recombining DNA molecules. Essential to convert dimers of the bacterial chromosome into monomers to permit their segregation at cell division. The protein is Tyrosine recombinase XerS of Streptococcus mutans serotype c (strain ATCC 700610 / UA159).